A 64-amino-acid polypeptide reads, in one-letter code: Large ribosomal subunit protein bL35 (64 aa).

This sequence belongs to the bacterial ribosomal protein bL35 family.

The sequence is that of Large ribosomal subunit protein bL35 from Helicobacter hepaticus (strain ATCC 51449 / 3B1).